The primary structure comprises 382 residues: Protein phosphatase 1A (382 aa).

Residue Gly-2 is the site of N-myristoyl glycine attachment. The PPM-type phosphatase domain maps to 23–291 (RYGLSSMQGW…DNMSVILICF (269 aa)). 4 residues coordinate Mn(2+): Asp-60, Gly-61, Asp-239, and Asp-282. A phosphoserine mark is found at Ser-375 and Ser-377.

The protein belongs to the PP2C family. Monomer. Interacts with SMAD2; the interaction dephosphorylates SMAD2 in its C-terminal SXS motif resulting in disruption of the SMAD2/SMAD4 complex, SMAD2 nuclear export and termination of the TGF-beta-mediated signaling. Interacts with SMAD2; the interaction dephosphorylates SMAD2 in its C-terminal SXS motif resulting in disruption of the SMAD2/SMAD4 complex, SMAD2 nuclear export and termination of the TGF-beta-mediated signaling. Interacts with the phosphorylated form of IKBKB/IKKB. The cofactor is Mg(2+). Requires Mn(2+) as cofactor. Post-translationally, N-myristoylation is essential for the recognition of its substrates for dephosphorylation.

It is found in the nucleus. The protein localises to the cytoplasm. Its subcellular location is the cytosol. The protein resides in the membrane. It catalyses the reaction O-phospho-L-seryl-[protein] + H2O = L-seryl-[protein] + phosphate. It carries out the reaction O-phospho-L-threonyl-[protein] + H2O = L-threonyl-[protein] + phosphate. Functionally, enzyme with a broad specificity. Negatively regulates TGF-beta signaling through dephosphorylating SMAD2 and SMAD3, resulting in their dissociation from SMAD4, nuclear export of the SMADs and termination of the TGF-beta-mediated signaling. Dephosphorylates PRKAA1 and PRKAA2. Plays an important role in the termination of TNF-alpha-mediated NF-kappa-B activation through dephosphorylating and inactivating IKBKB/IKKB. This is Protein phosphatase 1A (PPM1A) from Bos taurus (Bovine).